The primary structure comprises 498 residues: Lysine--tRNA ligase (498 aa).

Mg(2+) contacts are provided by E401 and E408.

The protein belongs to the class-II aminoacyl-tRNA synthetase family. As to quaternary structure, homodimer. The cofactor is Mg(2+).

The protein localises to the cytoplasm. The catalysed reaction is tRNA(Lys) + L-lysine + ATP = L-lysyl-tRNA(Lys) + AMP + diphosphate. The protein is Lysine--tRNA ligase of Dehalococcoides mccartyi (strain ATCC BAA-2266 / KCTC 15142 / 195) (Dehalococcoides ethenogenes (strain 195)).